The sequence spans 35 residues: Cupiennin-1a (35 aa).

Glu35 carries the glutamic acid 1-amide modification.

Belongs to the cationic peptide 04 (cupiennin) family. 01 subfamily. As to quaternary structure, monomer. Interacts with CSTX-1 (AC P81694), CSTX-9 (AC P58604), and CSTX-13 (AC P83919). As to expression, expressed by the venom gland.

It localises to the secreted. Its function is as follows. Has antimicrobial activity against B.subtilis, E.coli, E.faecalis, P.denitrificans, P.aeruginosa, P.putida, S.aureus, and S.epidermidis. Shows insecticidal and hemolytic activities. Probably acts by disturbing membrane function with its amphipathic structure. Synergistically increases the insecticidal activity of CSTX-1 (AC P81694), CSTX-9 (AC P58604), and CSTX-13 (AC P83919) by up to 65%. Also inhibits the formation of nitric oxide by neuronal nitric oxide synthase. This Cupiennius salei (American wandering spider) protein is Cupiennin-1a.